An 89-amino-acid chain; its full sequence is Small ribosomal subunit protein uS19 (89 aa).

It belongs to the universal ribosomal protein uS19 family.

Protein S19 forms a complex with S13 that binds strongly to the 16S ribosomal RNA. This is Small ribosomal subunit protein uS19 from Xylella fastidiosa (strain M23).